The following is a 488-amino-acid chain: ATP synthase subunit beta, chloroplastic (488 aa).

170-177 (GGAGVGKT) is a binding site for ATP.

The protein belongs to the ATPase alpha/beta chains family. In terms of assembly, F-type ATPases have 2 components, CF(1) - the catalytic core - and CF(0) - the membrane proton channel. CF(1) has five subunits: alpha(3), beta(3), gamma(1), delta(1), epsilon(1). CF(0) has four main subunits: a(1), b(1), b'(1) and c(9-12).

Its subcellular location is the plastid. It localises to the chloroplast thylakoid membrane. It catalyses the reaction ATP + H2O + 4 H(+)(in) = ADP + phosphate + 5 H(+)(out). Produces ATP from ADP in the presence of a proton gradient across the membrane. The catalytic sites are hosted primarily by the beta subunits. In Picea abies (Norway spruce), this protein is ATP synthase subunit beta, chloroplastic.